Reading from the N-terminus, the 353-residue chain is Protein AC18 (353 aa).

Its subcellular location is the host nucleus. It is found in the host cytoplasm. Its function is as follows. May play a role in occlusion-derived virions (ODV) formation and/or regulation of late viral gene expression. This chain is Protein AC18 (DA41), found in Autographa californica nuclear polyhedrosis virus (AcMNPV).